The chain runs to 669 residues: L-type lectin-domain containing receptor kinase IV.4 (669 aa).

Positions methionine 1 to serine 23 are cleaved as a signal peptide. The Extracellular portion of the chain corresponds to glutamine 24–tryptophan 294. Residues isoleucine 26–phenylalanine 260 form a legume-lectin like region. N-linked (GlcNAc...) asparagine glycans are attached at residues asparagine 58, asparagine 80, asparagine 127, asparagine 152, and asparagine 185. The helical transmembrane segment at valine 295 to isoleucine 315 threads the bilayer. Residues methionine 316–arginine 669 are Cytoplasmic-facing. The Protein kinase domain occupies phenylalanine 350–leucine 627. ATP-binding positions include leucine 356–valine 364 and lysine 379. Residue aspartate 475 is the Proton acceptor of the active site.

In the C-terminal section; belongs to the protein kinase superfamily. Ser/Thr protein kinase family. It in the N-terminal section; belongs to the leguminous lectin family.

It localises to the cell membrane. The enzyme catalyses L-seryl-[protein] + ATP = O-phospho-L-seryl-[protein] + ADP + H(+). It carries out the reaction L-threonyl-[protein] + ATP = O-phospho-L-threonyl-[protein] + ADP + H(+). Functionally, involved in resistance response to the pathogenic oomycetes Phytophthora infestans and Phytophthora capsici and to the pathogenic bacteria Pseudomonas syringae. The chain is L-type lectin-domain containing receptor kinase IV.4 from Arabidopsis thaliana (Mouse-ear cress).